The following is a 668-amino-acid chain: Probable 6-phosphofructo-2-kinase PB17E12.14c (668 aa).

Residues 1 to 14 show a composition bias toward basic and acidic residues; the sequence is MSNNNNKDDSELQS. Disordered stretches follow at residues 1–105 and 136–185; these read MSNN…GSRP and HRVP…EATN. 3 stretches are compositionally biased toward polar residues: residues 46–56, 65–86, and 164–184; these read NDHSFTNTDSV, SPVS…QNSP, and SSMS…SEAT. 197-204 is an ATP binding site; that stretch reads GLPARGKS. Residues aspartate 281 and cysteine 312 contribute to the active site. Residue arginine 346 participates in beta-D-fructose 6-phosphate binding. Residue glutamate 540 is part of the active site. Histidine 608 (proton donor) is an active-site residue.

The catalysed reaction is beta-D-fructose 6-phosphate + ATP = beta-D-fructose 2,6-bisphosphate + ADP + H(+). Functionally, synthesis of fructose 2,6-bisphosphate. This is Probable 6-phosphofructo-2-kinase PB17E12.14c from Schizosaccharomyces pombe (strain 972 / ATCC 24843) (Fission yeast).